The following is a 467-amino-acid chain: Cysteine--tRNA ligase (467 aa).

Zn(2+) is bound at residue Cys29. Positions 31–41 match the 'HIGH' region motif; that stretch reads PTVYNYVHIGN. Zn(2+)-binding residues include Cys209, His234, and Glu238. Residues 267 to 271 carry the 'KMSKS' region motif; sequence KMSKS. An ATP-binding site is contributed by Lys270.

This sequence belongs to the class-I aminoacyl-tRNA synthetase family. Monomer. Zn(2+) serves as cofactor.

The protein resides in the cytoplasm. It carries out the reaction tRNA(Cys) + L-cysteine + ATP = L-cysteinyl-tRNA(Cys) + AMP + diphosphate. This is Cysteine--tRNA ligase from Xylella fastidiosa (strain 9a5c).